Here is a 488-residue protein sequence, read N- to C-terminus: N-succinylglutamate 5-semialdehyde dehydrogenase (488 aa).

Gly-221–Gly-226 contacts NAD(+). Residues Glu-244 and Cys-278 contribute to the active site.

Belongs to the aldehyde dehydrogenase family. AstD subfamily.

The enzyme catalyses N-succinyl-L-glutamate 5-semialdehyde + NAD(+) + H2O = N-succinyl-L-glutamate + NADH + 2 H(+). The protein operates within amino-acid degradation; L-arginine degradation via AST pathway; L-glutamate and succinate from L-arginine: step 4/5. In terms of biological role, catalyzes the NAD-dependent reduction of succinylglutamate semialdehyde into succinylglutamate. This Pseudomonas syringae pv. tomato (strain ATCC BAA-871 / DC3000) protein is N-succinylglutamate 5-semialdehyde dehydrogenase.